The primary structure comprises 95 residues: Protein K6 (95 aa).

The N-terminal stretch at Met1–Ser24 is a signal peptide.

The protein is Protein K6 (K6) of Human herpesvirus 8 type P (isolate GK18) (HHV-8).